A 697-amino-acid polypeptide reads, in one-letter code: uncharacterized protein (697 aa).

Residues 516 to 545 adopt a coiled-coil conformation; sequence ADQSQNDVVALSSRIDRLTQEVVALQNSEK.

This is an uncharacterized protein from Callospermophilus lateralis (Golden-mantled ground squirrel).